Consider the following 131-residue polypeptide: ATP synthase lipid-binding protein, mitochondrial (131 aa).

A mitochondrion-targeting transit peptide spans M1–K56. A helical transmembrane segment spans residues V72–Y92. K99 is modified (N6,N6,N6-trimethyllysine). Residues I107–L127 traverse the membrane as a helical segment.

It belongs to the ATPase C chain family. F-type ATPases have 2 components, CF(1) - the catalytic core - and CF(0) - the membrane proton channel. CF(1) has five subunits: alpha(3), beta(3), gamma(1), delta(1), epsilon(1). CF(0) has three main subunits: a, b and c. Trimethylated by ATPSCKMT at Lys-99. Methylation may be required for proper incorporation of the C subunit into the ATP synthase complex and mitochondrial respiration.

It is found in the mitochondrion membrane. Its function is as follows. Mitochondrial membrane ATP synthase (F(1)F(0) ATP synthase or Complex V) produces ATP from ADP in the presence of a proton gradient across the membrane which is generated by electron transport complexes of the respiratory chain. F-type ATPases consist of two structural domains, F(1) - containing the extramembraneous catalytic core and F(0) - containing the membrane proton channel, linked together by a central stalk and a peripheral stalk. During catalysis, ATP synthesis in the catalytic domain of F(1) is coupled via a rotary mechanism of the central stalk subunits to proton translocation. Part of the complex F(0) domain. A homomeric c-ring of probably 10 subunits is part of the complex rotary element. The sequence is that of ATP synthase lipid-binding protein, mitochondrial from Manduca sexta (Tobacco hawkmoth).